The chain runs to 540 residues: MAKEIKFSEETRRALEAGVNKLADTVKVTLGPKGRNVILDKKFGSPLITNDGVTIAKEIELEDRFENMGAQLVKEVATKTNDVAGDGTTTATVLAQAIIREGLKNVTAGANPILLRKGIQKAVTVAVEELKNQSRIVETQEAISQVASISAGDEEVGKLIAEAMEIVGKDGVITVEESQTMNTELDAVEGMQFDRGFVSAYMVTDVDKMEAVLNDPYILITDKKISNIQELLPVLEQIVQQGKKLLIIAEDVEGEALSTLVVNKLRGTFDVVAVKAPGFGDRRKEMLQDIAILTGAQVISEELGYDLKEADLSMLGRASSVKVTKESTTIVDGSGDKKAIEDRVTQIKHQVEQTTSDFDREKLMERLAKLAGGVAVVKVGAATEVELKERKLRIEDALNATRAAVEEGIVAGGGTAFVSVIPAIGTLIESLEGEVKLGAQIVKKALEEPLRQIAINAGLEGAVIVQNVVNSEAETGFDALNEKYVNMIEAGIVDPTKVSRSALQNAASIASTFLTTEAAVADLPEKEDAGMPGTGMDGMY.

ATP-binding positions include 29 to 32 (TLGP), 86 to 90 (DGTTT), G413, 478 to 480 (DAL), and D494.

It belongs to the chaperonin (HSP60) family. As to quaternary structure, forms a cylinder of 14 subunits composed of two heptameric rings stacked back-to-back. Interacts with the co-chaperonin GroES.

The protein resides in the cytoplasm. The catalysed reaction is ATP + H2O + a folded polypeptide = ADP + phosphate + an unfolded polypeptide.. Functionally, together with its co-chaperonin GroES, plays an essential role in assisting protein folding. The GroEL-GroES system forms a nano-cage that allows encapsulation of the non-native substrate proteins and provides a physical environment optimized to promote and accelerate protein folding. The polypeptide is Chaperonin GroEL (Clostridioides difficile (Peptoclostridium difficile)).